Here is a 313-residue protein sequence, read N- to C-terminus: MTNVSGVDFQLRSVPLLSRVGADRADRLRTDMEAAAAGWPGAALLRVDSRNRVLVANGRVLLGAAIELADKPPPEAVFLGRVEGGRHVWAVRAALQPIADPDIPAEAVDLRGLGRIMDDTSSQLVSSASALLNWHDNARFSALDGAPTKPARAGWSRVNPITGHEEFPRIDPAVICLVHDGADRAVLARQAAWPERMFSLLAGFVEAGESFEVCVAREIREEIGLTVRDVRYLGSQPWPFPRSLMVGFHALGDPDEEFSFSDGEIAEAAWFTRDEVRAALAAGDWSSASESKLLLPGSISIARVIIESWAACE.

Position 111 (arginine 111) interacts with substrate. Positions 168–293 (PRIDPAVICL…DWSSASESKL (126 aa)) constitute a Nudix hydrolase domain. Alanine 202, glutamate 218, and glutamate 222 together coordinate a divalent metal cation. A Nudix box motif is present at residues 203-224 (GFVEAGESFEVCVAREIREEIG). Position 236–243 (236–243 (QPWPFPRS)) interacts with substrate. Glutamate 264 contacts a divalent metal cation.

The protein belongs to the Nudix hydrolase family. NudC subfamily. Homodimer. The cofactor is Mg(2+). Requires Mn(2+) as cofactor.

The catalysed reaction is a 5'-end NAD(+)-phospho-ribonucleoside in mRNA + H2O = a 5'-end phospho-adenosine-phospho-ribonucleoside in mRNA + beta-nicotinamide D-ribonucleotide + 2 H(+). It catalyses the reaction NAD(+) + H2O = beta-nicotinamide D-ribonucleotide + AMP + 2 H(+). The enzyme catalyses NADH + H2O = reduced beta-nicotinamide D-ribonucleotide + AMP + 2 H(+). Its function is as follows. mRNA decapping enzyme that specifically removes the nicotinamide adenine dinucleotide (NAD) cap from a subset of mRNAs by hydrolyzing the diphosphate linkage to produce nicotinamide mononucleotide (NMN) and 5' monophosphate mRNA. The NAD-cap is present at the 5'-end of some mRNAs and stabilizes RNA against 5'-processing. Has preference for mRNAs with a 5'-end purine. Catalyzes the hydrolysis of a broad range of dinucleotide pyrophosphates. The protein is NAD-capped RNA hydrolase NudC of Mycobacterium bovis (strain ATCC BAA-935 / AF2122/97).